A 391-amino-acid chain; its full sequence is D-alanine--D-alanine ligase (391 aa).

Residues methionine 1–arginine 24 are disordered. The region spanning lysine 171–glutamine 381 is the ATP-grasp domain. Alanine 207–glutamate 262 is an ATP binding site. Positions 335, 348, and 350 each coordinate Mg(2+).

This sequence belongs to the D-alanine--D-alanine ligase family. Mg(2+) serves as cofactor. The cofactor is Mn(2+).

It localises to the cytoplasm. The enzyme catalyses 2 D-alanine + ATP = D-alanyl-D-alanine + ADP + phosphate + H(+). The protein operates within cell wall biogenesis; peptidoglycan biosynthesis. Functionally, cell wall formation. This is D-alanine--D-alanine ligase from Streptomyces griseus subsp. griseus (strain JCM 4626 / CBS 651.72 / NBRC 13350 / KCC S-0626 / ISP 5235).